The chain runs to 214 residues: Large ribosomal subunit protein uL3 (214 aa).

The disordered stretch occupies residues 119-159; it reads GVKRHGFAGGPKTHGQSDRHRAPGSIGPTTDPGRVHKGKRM.

This sequence belongs to the universal ribosomal protein uL3 family. Part of the 50S ribosomal subunit. Forms a cluster with proteins L14 and L19.

In terms of biological role, one of the primary rRNA binding proteins, it binds directly near the 3'-end of the 23S rRNA, where it nucleates assembly of the 50S subunit. The chain is Large ribosomal subunit protein uL3 from Thermomicrobium roseum (strain ATCC 27502 / DSM 5159 / P-2).